A 203-amino-acid polypeptide reads, in one-letter code: Suppressor of RNA silencing p3 (203 aa).

This sequence belongs to the tenuiviruses p3 protein family. In terms of assembly, homodimer.

The protein localises to the host cytoplasm. Acts as a suppressor of RNA-mediated gene silencing, also known as post-transcriptional gene silencing (PTGS), presumably through the binding of dsRNA. This Oryza sativa (Rice) protein is Suppressor of RNA silencing p3.